The chain runs to 574 residues: Proline--tRNA ligase (574 aa).

Belongs to the class-II aminoacyl-tRNA synthetase family. ProS type 1 subfamily. In terms of assembly, homodimer.

It localises to the cytoplasm. The enzyme catalyses tRNA(Pro) + L-proline + ATP = L-prolyl-tRNA(Pro) + AMP + diphosphate. Functionally, catalyzes the attachment of proline to tRNA(Pro) in a two-step reaction: proline is first activated by ATP to form Pro-AMP and then transferred to the acceptor end of tRNA(Pro). As ProRS can inadvertently accommodate and process non-cognate amino acids such as alanine and cysteine, to avoid such errors it has two additional distinct editing activities against alanine. One activity is designated as 'pretransfer' editing and involves the tRNA(Pro)-independent hydrolysis of activated Ala-AMP. The other activity is designated 'posttransfer' editing and involves deacylation of mischarged Ala-tRNA(Pro). The misacylated Cys-tRNA(Pro) is not edited by ProRS. The protein is Proline--tRNA ligase of Anaeromyxobacter sp. (strain K).